We begin with the raw amino-acid sequence, 484 residues long: ATP synthase subunit beta, chloroplastic (484 aa).

163-170 (GGAGVGKT) serves as a coordination point for ATP.

The protein belongs to the ATPase alpha/beta chains family. F-type ATPases have 2 components, CF(1) - the catalytic core - and CF(0) - the membrane proton channel. CF(1) has five subunits: alpha(3), beta(3), gamma(1), delta(1), epsilon(1). CF(0) has four main subunits: a(1), b(1), b'(1) and c(9-12).

It is found in the plastid. It localises to the chloroplast thylakoid membrane. It carries out the reaction ATP + H2O + 4 H(+)(in) = ADP + phosphate + 5 H(+)(out). Produces ATP from ADP in the presence of a proton gradient across the membrane. The catalytic sites are hosted primarily by the beta subunits. This Stigeoclonium helveticum (Green alga) protein is ATP synthase subunit beta, chloroplastic.